A 178-amino-acid chain; its full sequence is Inorganic pyrophosphatase (178 aa).

Substrate contacts are provided by Lys-30, Arg-44, and Tyr-56. Asp-66, Asp-71, and Asp-103 together coordinate Mg(2+). Residue Tyr-142 participates in substrate binding.

It belongs to the PPase family. Homohexamer. Mg(2+) serves as cofactor.

Its subcellular location is the cytoplasm. The enzyme catalyses diphosphate + H2O = 2 phosphate + H(+). Catalyzes the hydrolysis of inorganic pyrophosphate (PPi) forming two phosphate ions. This chain is Inorganic pyrophosphatase, found in Xanthomonas campestris pv. campestris (strain ATCC 33913 / DSM 3586 / NCPPB 528 / LMG 568 / P 25).